The following is a 606-amino-acid chain: NADH-ubiquinone oxidoreductase chain 5 (606 aa).

14 helical membrane passes run 1-21 (MNMF…PIIM), 43-63 (AFMI…ETII), 87-107 (MIFV…SMWY), 117-137 (FFKY…ANNM), 140-160 (LFIG…WWYG), 171-191 (AVLY…WFLL), 241-261 (TPVS…FLLI), 273-293 (IQTL…ICAL), 310-330 (LGLM…LHIC), 365-385 (VLPF…GMPF), 409-429 (LLIT…IMFF), 457-477 (LLIG…PTTI), 488-508 (MTAL…NLTT), and 582-602 (GLIK…LLIL).

Belongs to the complex I subunit 5 family. In terms of assembly, core subunit of respiratory chain NADH dehydrogenase (Complex I) which is composed of 45 different subunits.

It localises to the mitochondrion inner membrane. The enzyme catalyses a ubiquinone + NADH + 5 H(+)(in) = a ubiquinol + NAD(+) + 4 H(+)(out). Core subunit of the mitochondrial membrane respiratory chain NADH dehydrogenase (Complex I) which catalyzes electron transfer from NADH through the respiratory chain, using ubiquinone as an electron acceptor. Essential for the catalytic activity and assembly of complex I. This Canis lupus (Gray wolf) protein is NADH-ubiquinone oxidoreductase chain 5 (MT-ND5).